We begin with the raw amino-acid sequence, 293 residues long: tRNA pseudouridine synthase B (293 aa).

The active-site Nucleophile is Asp38.

This sequence belongs to the pseudouridine synthase TruB family. Type 1 subfamily.

The enzyme catalyses uridine(55) in tRNA = pseudouridine(55) in tRNA. Responsible for synthesis of pseudouridine from uracil-55 in the psi GC loop of transfer RNAs. This Microcystis aeruginosa (strain NIES-843 / IAM M-2473) protein is tRNA pseudouridine synthase B.